The chain runs to 214 residues: Redox-sensing transcriptional repressor Rex (214 aa).

The H-T-H motif DNA-binding region spans 17-56; it reads LYYRIFKRFHADQVEKASSKQIADAMGIDSATVRRDFSYF. 91–96 is an NAD(+) binding site; that stretch reads GCGNIG.

This sequence belongs to the transcriptional regulatory Rex family. As to quaternary structure, homodimer.

The protein resides in the cytoplasm. Functionally, modulates transcription in response to changes in cellular NADH/NAD(+) redox state. The sequence is that of Redox-sensing transcriptional repressor Rex from Streptococcus pyogenes serotype M12 (strain MGAS9429).